A 133-amino-acid chain; its full sequence is Holo-[acyl-carrier-protein] synthase (133 aa).

Mg(2+)-binding residues include D8 and E56.

It belongs to the P-Pant transferase superfamily. AcpS family. Mg(2+) serves as cofactor.

It localises to the cytoplasm. It carries out the reaction apo-[ACP] + CoA = holo-[ACP] + adenosine 3',5'-bisphosphate + H(+). In terms of biological role, transfers the 4'-phosphopantetheine moiety from coenzyme A to a Ser of acyl-carrier-protein. This is Holo-[acyl-carrier-protein] synthase from Deinococcus radiodurans (strain ATCC 13939 / DSM 20539 / JCM 16871 / CCUG 27074 / LMG 4051 / NBRC 15346 / NCIMB 9279 / VKM B-1422 / R1).